Consider the following 184-residue polypeptide: ATP synthase subunit b (184 aa).

The chain crosses the membrane as a helical span at residues 16–36 (LIPPIPELVIGLIAFVIVFGF).

This sequence belongs to the ATPase B chain family. In terms of assembly, F-type ATPases have 2 components, F(1) - the catalytic core - and F(0) - the membrane proton channel. F(1) has five subunits: alpha(3), beta(3), gamma(1), delta(1), epsilon(1). F(0) has three main subunits: a(1), b(2) and c(10-14). The alpha and beta chains form an alternating ring which encloses part of the gamma chain. F(1) is attached to F(0) by a central stalk formed by the gamma and epsilon chains, while a peripheral stalk is formed by the delta and b chains.

The protein localises to the cell membrane. Its function is as follows. F(1)F(0) ATP synthase produces ATP from ADP in the presence of a proton or sodium gradient. F-type ATPases consist of two structural domains, F(1) containing the extramembraneous catalytic core and F(0) containing the membrane proton channel, linked together by a central stalk and a peripheral stalk. During catalysis, ATP synthesis in the catalytic domain of F(1) is coupled via a rotary mechanism of the central stalk subunits to proton translocation. Functionally, component of the F(0) channel, it forms part of the peripheral stalk, linking F(1) to F(0). The sequence is that of ATP synthase subunit b from Streptomyces coelicolor (strain ATCC BAA-471 / A3(2) / M145).